The sequence spans 254 residues: MTNRLQGKVALVTGGASGVGLEVVKLLLGEGAKVAFSDINEAAGQQLAAELGERSMFVRHDVSSEADWTLVMAAVQRRLGTLNVLVNNAGILLPGDMETGRLEDFSRLLKINTESVFIGCQQGIAAMKETGGSIINMASVSSWLPIEQYAGYSASKAAVSALTRAAALSCRKQGYAIRVNSIHPDGIYTPMMQASLPKGVSKEMVLHDPKLNRAGRAYMPERIAQLVLFLASDESSVMSGSELHADNSILGMGL.

NAD(+) is bound by residues valine 12–asparagine 40 and aspartate 61. Serine 139 provides a ligand contact to substrate. Residue tyrosine 152 is the Proton acceptor of the active site. Lysine 156 is a binding site for NAD(+).

This sequence belongs to the short-chain dehydrogenases/reductases (SDR) family. Homotetramer.

The catalysed reaction is testosterone + NAD(+) = androst-4-ene-3,17-dione + NADH + H(+). It catalyses the reaction testosterone + NADP(+) = androst-4-ene-3,17-dione + NADPH + H(+). The chain is 3-beta-hydroxysteroid dehydrogenase from Comamonas testosteroni (Pseudomonas testosteroni).